Consider the following 81-residue polypeptide: MSSTYCGNSSAKMSVNEVSAFSLTLEQKTGFAFVGILCIFLGLLIIRCFKILLDPYSSMPSSTWEDEVEEFDKGTFEYALA.

Residues 29–49 (TGFAFVGILCIFLGLLIIRCF) form a helical membrane-spanning segment.

The protein belongs to the cortexin family.

The protein resides in the membrane. This is Cortexin-2 (CTXN2) from Homo sapiens (Human).